The chain runs to 296 residues: Glycine N-acyltransferase (296 aa).

Residues Lys16, Lys127, and Lys141 each carry the N6-acetyllysine; alternate modification. Residues Lys16, Lys127, and Lys141 each carry the N6-succinyllysine; alternate modification. Residue Lys159 is modified to N6-acetyllysine. An N6-succinyllysine modification is found at Lys169. N6-acetyllysine; alternate is present on residues Lys183 and Lys256. N6-succinyllysine; alternate occurs at positions 183 and 256.

Belongs to the glycine N-acyltransferase family.

The protein localises to the mitochondrion. It catalyses the reaction an acyl-CoA + glycine = an N-acylglycine + CoA + H(+). The enzyme catalyses benzoyl-CoA + glycine = N-benzoylglycine + CoA + H(+). In terms of biological role, mitochondrial acyltransferase which transfers an acyl group to the N-terminus of glycine and glutamine, although much less efficiently. Can conjugate a multitude of substrates to form a variety of N-acylglycines, thereby detoxify xenobiotics, such as benzoic acid or salicylic acid, and endogenous organic acids, such as isovaleric acid. This Pongo abelii (Sumatran orangutan) protein is Glycine N-acyltransferase (GLYAT).